Consider the following 658-residue polypeptide: Probable rhamnogalacturonate lyase B (658 aa).

Positions 1-19 are cleaved as a signal peptide; sequence MRFAIPLGAACAWAGVALA. N-linked (GlcNAc...) asparagine glycans are attached at residues N110, N143, N239, N280, N522, N530, N592, and N633.

It belongs to the polysaccharide lyase 4 family.

It is found in the secreted. The enzyme catalyses Endotype eliminative cleavage of L-alpha-rhamnopyranosyl-(1-&gt;4)-alpha-D-galactopyranosyluronic acid bonds of rhamnogalacturonan I domains in ramified hairy regions of pectin leaving L-rhamnopyranose at the reducing end and 4-deoxy-4,5-unsaturated D-galactopyranosyluronic acid at the non-reducing end.. Functionally, pectinolytic enzymes consist of four classes of enzymes: pectin lyase, polygalacturonase, pectin methylesterase and rhamnogalacturonase. Degrades the rhamnogalacturonan I (RG-I) backbone of pectin. In Aspergillus fumigatus (strain CBS 144.89 / FGSC A1163 / CEA10) (Neosartorya fumigata), this protein is Probable rhamnogalacturonate lyase B (rglB).